Reading from the N-terminus, the 377-residue chain is D-alanine--D-alanine ligase (377 aa).

The ATP-grasp domain occupies 140–349; it reads KELLTVNGIR…NAKLVDMLID (210 aa). An ATP-binding site is contributed by 170 to 225; the sequence is VAELGNIVFVKAANQGSSVGISRVTNAEEYTEALSDSFQYDYKVLIEEAVNGAREL. Mg(2+) contacts are provided by D303, E316, and N318.

Belongs to the D-alanine--D-alanine ligase family. Mg(2+) serves as cofactor. Mn(2+) is required as a cofactor.

It is found in the cytoplasm. It catalyses the reaction 2 D-alanine + ATP = D-alanyl-D-alanine + ADP + phosphate + H(+). The protein operates within cell wall biogenesis; peptidoglycan biosynthesis. Functionally, cell wall formation. The protein is D-alanine--D-alanine ligase of Leuconostoc mesenteroides subsp. mesenteroides (strain ATCC 8293 / DSM 20343 / BCRC 11652 / CCM 1803 / JCM 6124 / NCDO 523 / NBRC 100496 / NCIMB 8023 / NCTC 12954 / NRRL B-1118 / 37Y).